The chain runs to 257 residues: 3-methyl-2-oxobutanoate hydroxymethyltransferase (257 aa).

Positions 42 and 86 each coordinate Mg(2+). 3-methyl-2-oxobutanoate-binding positions include D42–S43, D86, and K116. Position 118 (E118) interacts with Mg(2+). The Proton acceptor role is filled by E185.

The protein belongs to the PanB family. In terms of assembly, homodecamer; pentamer of dimers. It depends on Mg(2+) as a cofactor.

Its subcellular location is the cytoplasm. It carries out the reaction 3-methyl-2-oxobutanoate + (6R)-5,10-methylene-5,6,7,8-tetrahydrofolate + H2O = 2-dehydropantoate + (6S)-5,6,7,8-tetrahydrofolate. It functions in the pathway cofactor biosynthesis; (R)-pantothenate biosynthesis; (R)-pantoate from 3-methyl-2-oxobutanoate: step 1/2. Catalyzes the reversible reaction in which hydroxymethyl group from 5,10-methylenetetrahydrofolate is transferred onto alpha-ketoisovalerate to form ketopantoate. The chain is 3-methyl-2-oxobutanoate hydroxymethyltransferase from Prochlorococcus marinus (strain MIT 9301).